We begin with the raw amino-acid sequence, 675 residues long: DNA ligase (675 aa).

NAD(+)-binding positions include 34–38 (DAEYD), 83–84 (SL), and glutamate 116. The active-site N6-AMP-lysine intermediate is the lysine 118. NAD(+)-binding residues include arginine 139, glutamate 176, lysine 293, and lysine 317. Zn(2+) is bound by residues cysteine 411, cysteine 414, cysteine 429, and cysteine 435. One can recognise a BRCT domain in the interval 594 to 675 (AGENPFKGKT…FLAIVNAYKR (82 aa)).

This sequence belongs to the NAD-dependent DNA ligase family. LigA subfamily. Mg(2+) is required as a cofactor. The cofactor is Mn(2+).

It catalyses the reaction NAD(+) + (deoxyribonucleotide)n-3'-hydroxyl + 5'-phospho-(deoxyribonucleotide)m = (deoxyribonucleotide)n+m + AMP + beta-nicotinamide D-nucleotide.. Its function is as follows. DNA ligase that catalyzes the formation of phosphodiester linkages between 5'-phosphoryl and 3'-hydroxyl groups in double-stranded DNA using NAD as a coenzyme and as the energy source for the reaction. It is essential for DNA replication and repair of damaged DNA. This Mannheimia succiniciproducens (strain KCTC 0769BP / MBEL55E) protein is DNA ligase.